A 1229-amino-acid polypeptide reads, in one-letter code: DNA-directed RNA polymerase subunit beta (1229 aa).

Belongs to the RNA polymerase beta chain family. As to quaternary structure, the RNAP catalytic core consists of 2 alpha, 1 beta, 1 beta' and 1 omega subunit. When a sigma factor is associated with the core the holoenzyme is formed, which can initiate transcription.

The catalysed reaction is RNA(n) + a ribonucleoside 5'-triphosphate = RNA(n+1) + diphosphate. Functionally, DNA-dependent RNA polymerase catalyzes the transcription of DNA into RNA using the four ribonucleoside triphosphates as substrates. The sequence is that of DNA-directed RNA polymerase subunit beta from Roseiflexus sp. (strain RS-1).